The chain runs to 437 residues: Eukaryotic peptide chain release factor subunit 1 (437 aa).

Gln182 carries the post-translational modification N5-methylglutamine. Lys331 is covalently cross-linked (Glycyl lysine isopeptide (Lys-Gly) (interchain with G-Cter in ubiquitin)). Ser421 carries the phosphoserine modification.

Belongs to the eukaryotic release factor 1 family. Component of the eRF1-eRF3-GTP ternary complex, composed of SUP45/eRF1, SUP35/eRF3 and GTP. Interacts with TPA1. Post-translationally, N5-methylated on Gln-182 by MTQ2.

The protein localises to the cytoplasm. Its function is as follows. Component of the eRF1-eRF3-GTP ternary complex, a ternary complex that mediates translation termination in response to the termination codons. The eRF1-eRF3-GTP complex binds to a stop codon in the ribosomal A-site. SUP45/eRF1 is responsible for stop codon recognition and inducing hydrolysis of peptidyl-tRNA. Following GTP hydrolysis by SUP35/eRF3, SUP35/eRF3 dissociates, permitting SUP45/eRF1 to accommodate fully in the A-site and mediate hydrolysis of peptidyl-tRNA. The sequence is that of Eukaryotic peptide chain release factor subunit 1 (SUP45) from Saccharomyces cerevisiae (strain ATCC 204508 / S288c) (Baker's yeast).